Reading from the N-terminus, the 120-residue chain is Glycine cleavage system H protein (120 aa).

The Lipoyl-binding domain maps to 19–101 (DGTVGISDFA…YTDGWLFRLD (83 aa)). Residue Lys-60 is modified to N6-lipoyllysine.

Belongs to the GcvH family. The glycine cleavage system is composed of four proteins: P, T, L and H. (R)-lipoate is required as a cofactor.

Its function is as follows. The glycine cleavage system catalyzes the degradation of glycine. The H protein shuttles the methylamine group of glycine from the P protein to the T protein. This is Glycine cleavage system H protein from Deinococcus geothermalis (strain DSM 11300 / CIP 105573 / AG-3a).